The chain runs to 157 residues: Snaclec A16 (157 aa).

An N-terminal signal peptide occupies residues 1–23; the sequence is MGRLISVSFGLLVVFLSLSGTGA. Intrachain disulfides connect Cys27/Cys38, Cys55/Cys149, and Cys124/Cys141. Positions 34–150 constitute a C-type lectin domain; sequence YEGHCYKVFN…CELAYHFICM (117 aa).

It belongs to the snaclec family. As to quaternary structure, heterodimer; disulfide-linked. Expressed by the venom gland.

The protein resides in the secreted. Its function is as follows. Interferes with one step of hemostasis (modulation of platelet aggregation, or coagulation cascade, for example). The chain is Snaclec A16 from Macrovipera lebetinus (Levantine viper).